Consider the following 273-residue polypeptide: 4-hydroxy-tetrahydrodipicolinate reductase (273 aa).

NAD(+) is bound by residues 12 to 17 and glutamate 38; that span reads GAGGRM. Arginine 39 provides a ligand contact to NADP(+). NAD(+) is bound by residues 102 to 104 and 126 to 129; these read GTT and AANF. The active-site Proton donor/acceptor is the histidine 159. (S)-2,3,4,5-tetrahydrodipicolinate is bound at residue histidine 160. Residue lysine 163 is the Proton donor of the active site. 169–170 contributes to the (S)-2,3,4,5-tetrahydrodipicolinate binding site; the sequence is GT.

This sequence belongs to the DapB family. Homotetramer.

It is found in the cytoplasm. The enzyme catalyses (S)-2,3,4,5-tetrahydrodipicolinate + NAD(+) + H2O = (2S,4S)-4-hydroxy-2,3,4,5-tetrahydrodipicolinate + NADH + H(+). The catalysed reaction is (S)-2,3,4,5-tetrahydrodipicolinate + NADP(+) + H2O = (2S,4S)-4-hydroxy-2,3,4,5-tetrahydrodipicolinate + NADPH + H(+). The protein operates within amino-acid biosynthesis; L-lysine biosynthesis via DAP pathway; (S)-tetrahydrodipicolinate from L-aspartate: step 4/4. Its function is as follows. Catalyzes the conversion of 4-hydroxy-tetrahydrodipicolinate (HTPA) to tetrahydrodipicolinate. The polypeptide is 4-hydroxy-tetrahydrodipicolinate reductase (Yersinia pestis bv. Antiqua (strain Antiqua)).